A 123-amino-acid polypeptide reads, in one-letter code: uncharacterized protein (123 aa).

This is an uncharacterized protein from Bacillus subtilis (strain 168).